A 428-amino-acid chain; its full sequence is Enolase (428 aa).

Glutamine 163 is a (2R)-2-phosphoglycerate binding site. Catalysis depends on glutamate 205, which acts as the Proton donor. Aspartate 242, glutamate 286, and aspartate 313 together coordinate Mg(2+). Positions 338, 367, 368, and 389 each coordinate (2R)-2-phosphoglycerate. Residue lysine 338 is the Proton acceptor of the active site.

Belongs to the enolase family. Mg(2+) serves as cofactor.

It localises to the cytoplasm. Its subcellular location is the secreted. It is found in the cell surface. The enzyme catalyses (2R)-2-phosphoglycerate = phosphoenolpyruvate + H2O. The protein operates within carbohydrate degradation; glycolysis; pyruvate from D-glyceraldehyde 3-phosphate: step 4/5. In terms of biological role, catalyzes the reversible conversion of 2-phosphoglycerate (2-PG) into phosphoenolpyruvate (PEP). It is essential for the degradation of carbohydrates via glycolysis. This Acidovorax sp. (strain JS42) protein is Enolase.